The following is a 128-amino-acid chain: S-adenosylmethionine decarboxylase proenzyme (128 aa).

Catalysis depends on Ser61, which acts as the Schiff-base intermediate with substrate; via pyruvic acid. Ser61 bears the Pyruvic acid (Ser); by autocatalysis mark. The active-site Proton acceptor; for processing activity is the His66. Cys81 (proton donor; for catalytic activity) is an active-site residue.

It belongs to the prokaryotic AdoMetDC family. Type 1 subfamily. Heterotetramer of two alpha and two beta chains arranged as a dimer of alpha/beta heterodimers. The cofactor is pyruvate. Post-translationally, is synthesized initially as an inactive proenzyme. Formation of the active enzyme involves a self-maturation process in which the active site pyruvoyl group is generated from an internal serine residue via an autocatalytic post-translational modification. Two non-identical subunits are generated from the proenzyme in this reaction, and the pyruvate is formed at the N-terminus of the alpha chain, which is derived from the carboxyl end of the proenzyme. The post-translation cleavage follows an unusual pathway, termed non-hydrolytic serinolysis, in which the side chain hydroxyl group of the serine supplies its oxygen atom to form the C-terminus of the beta chain, while the remainder of the serine residue undergoes an oxidative deamination to produce ammonia and the pyruvoyl group blocking the N-terminus of the alpha chain.

The enzyme catalyses S-adenosyl-L-methionine + H(+) = S-adenosyl 3-(methylsulfanyl)propylamine + CO2. The protein operates within amine and polyamine biosynthesis; S-adenosylmethioninamine biosynthesis; S-adenosylmethioninamine from S-adenosyl-L-methionine: step 1/1. In terms of biological role, catalyzes the decarboxylation of S-adenosylmethionine to S-adenosylmethioninamine (dcAdoMet), the propylamine donor required for the synthesis of the polyamines spermine and spermidine from the diamine putrescine. The polypeptide is S-adenosylmethionine decarboxylase proenzyme (Synechococcus sp. (strain WH7803)).